The primary structure comprises 356 residues: Protein-arginine kinase (356 aa).

The 233-residue stretch at 24-256 (IIISSRVRVA…RQILAQEQAA (233 aa)) folds into the Phosphagen kinase C-terminal domain. ATP-binding positions include 27-31 (SSRVR), histidine 93, arginine 127, 178-182 (RASVM), and 209-214 (RGLYGE). The RDXXRA motif of the pArg binding pocket involved in allosteric regulation signature appears at 339 to 344 (RDIFRA).

It belongs to the ATP:guanido phosphotransferase family.

The enzyme catalyses L-arginyl-[protein] + ATP = N(omega)-phospho-L-arginyl-[protein] + ADP + H(+). Its activity is regulated as follows. Appears to be allosterically activated by the binding of pArg-containing polypeptides to the pArg-binding pocket localized in the C-terminal domain of McsB. Catalyzes the specific phosphorylation of arginine residues in proteins. The sequence is that of Protein-arginine kinase from Pelotomaculum thermopropionicum (strain DSM 13744 / JCM 10971 / SI).